The primary structure comprises 369 residues: Anhydro-N-acetylmuramic acid kinase (369 aa).

Position 12-19 (12-19 (GTSLDGVD)) interacts with ATP.

It belongs to the anhydro-N-acetylmuramic acid kinase family.

The catalysed reaction is 1,6-anhydro-N-acetyl-beta-muramate + ATP + H2O = N-acetyl-D-muramate 6-phosphate + ADP + H(+). The protein operates within amino-sugar metabolism; 1,6-anhydro-N-acetylmuramate degradation. It functions in the pathway cell wall biogenesis; peptidoglycan recycling. Catalyzes the specific phosphorylation of 1,6-anhydro-N-acetylmuramic acid (anhMurNAc) with the simultaneous cleavage of the 1,6-anhydro ring, generating MurNAc-6-P. Is required for the utilization of anhMurNAc either imported from the medium or derived from its own cell wall murein, and thus plays a role in cell wall recycling. This Escherichia coli O6:K15:H31 (strain 536 / UPEC) protein is Anhydro-N-acetylmuramic acid kinase.